Consider the following 282-residue polypeptide: Cyanocobalamin reductase / alkylcobalamin dealkylase (282 aa).

Residues aspartate 104, 115–118 (ILAQ), 129–131 (YYQ), cysteine 149, and isoleucine 160 each bind substrate. Positions 234 to 282 (LGLAQPSEKPSSPSPDLPFTTPAPKKPGNPSRARSWLSPRVSPPASPGP) are disordered. 4 positions are modified to phosphoserine: serine 245, serine 247, serine 275, and serine 279.

This sequence belongs to the MMACHC family. Monomer in the absence of bound substrate. Homodimer; dimerization is triggered by binding to FMN or adenosylcobalamin. Interacts with LMBRD1 and ABCD4; the interaction ensures the transport of cobalamin from the lysosome to the cytoplasm. Forms a multiprotein complex with MMADHC, MTR and MTRR; the interaction with MTR could modulate MMACHC-dependent processing of cobalamin. Heterodimer with MMADHC; the interaction might play a role in the regulation of the balance between AdoCbl and MeCbl synthesis. FAD is required as a cofactor. Requires FMN as cofactor. Widely expressed. Expressed at higher level in fetal liver. Also expressed in spleen, lymph node, thymus and bone marrow. Weakly or not expressed in peripheral blood leukocytes.

It is found in the cytoplasm. The protein localises to the cytosol. The enzyme catalyses 2 cob(II)alamin-[cyanocobalamin reductase] + 2 hydrogen cyanide + NADP(+) = 2 cyanocob(III)alamin + 2 apo-[cyanocobalamin reductase] + NADPH + H(+). The catalysed reaction is apo-[alkylcobalamin reductase] + an R-cob(III)alamin + glutathione = cob(I)alamin-[alkylcobalamin reductase] + an S-substituted glutathione + H(+). It catalyses the reaction apo-[alkylcobalamin reductase] + methylcob(III)alamin + glutathione = S-methyl glutathione + cob(I)alamin-[alkylcobalamin reductase] + H(+). It carries out the reaction apo-[alkylcobalamin reductase] + adenosylcob(III)alamin + glutathione = S-adenosylglutathione + cob(I)alamin-[alkylcobalamin reductase] + H(+). Cobalamin (vitamin B12) cytosolic chaperone that catalyzes the reductive decyanation of cyanocob(III)alamin (cyanocobalamin, CNCbl) to yield cob(II)alamin and cyanide, using FAD or FMN as cofactors and NADPH as cosubstrate. Cyanocobalamin constitutes the inactive form of vitamin B12 introduced from the diet, and is converted into the active cofactors methylcobalamin (MeCbl) involved in methionine biosynthesis, and 5'-deoxyadenosylcobalamin (AdoCbl) involved in the TCA cycle. Forms a complex with the lysosomal transporter ABCD4 and its chaperone LMBRD1, to transport cobalamin across the lysosomal membrane into the cytosol. The processing of cobalamin in the cytosol occurs in a multiprotein complex composed of at least MMACHC, MMADHC, MTRR (methionine synthase reductase) and MTR (methionine synthase) which may contribute to shuttle safely and efficiently cobalamin towards MTR in order to produce methionine. Also acts as a glutathione transferase by catalyzing the dealkylation of the alkylcob(III)alamins MeCbl and AdoCbl, using the thiolate of glutathione for nucleophilic displacement to generate cob(I)alamin and the corresponding glutathione thioether. The conversion of incoming MeCbl or AdoCbl into a common intermediate cob(I)alamin is necessary to meet the cellular needs for both cofactors. Cysteine and homocysteine cannot substitute for glutathione in this reaction. This is Cyanocobalamin reductase / alkylcobalamin dealkylase from Homo sapiens (Human).